A 606-amino-acid chain; its full sequence is ATP-dependent rRNA helicase SPB4 (606 aa).

Positions 7 to 35 match the Q motif motif; it reads WDNLGFSLLPWIRTGLDVMGFETMTPVQA. The region spanning 38–224 is the Helicase ATP-binding domain; the sequence is IPMLAGNKDV…KTGLRNPVRI (187 aa). 51–58 is a binding site for ATP; that stretch reads SVTGSGKT. Residues 172 to 175 carry the DEAD box motif; that stretch reads DEAD. Residues 248–404 form the Helicase C-terminal domain; that stretch reads KLQLLVSILN…ELDLEVKGIT (157 aa). A Phosphoserine modification is found at serine 254. A coiled-coil region spans residues 539–582; sequence KTLTKERKLERKEKMSLKRKAIEEELKAEELDENAEEERIKEDW.

Belongs to the DEAD box helicase family. DDX55/SPB4 subfamily. In terms of assembly, component of pre-60S ribosomal complexes.

Its subcellular location is the nucleus. The protein resides in the nucleolus. The catalysed reaction is ATP + H2O = ADP + phosphate + H(+). Functionally, ATP-binding RNA helicase involved in the biogenesis of 60S ribosomal subunits. Binds 90S pre-ribosomal particles and dissociates from pre-60S ribosomal particles after processing of 27SB pre-rRNA. Required for the normal formation of 18S rRNA through the processing of pre-rRNAs at sites A0, A1 and A2, and the normal formation of 25S and 5.8S rRNAs through the processing of pre-rRNAs at sites C1 and C2. Also required for recruitment of NOG2 to pre-ribosomes. The chain is ATP-dependent rRNA helicase SPB4 from Saccharomyces cerevisiae (strain ATCC 204508 / S288c) (Baker's yeast).